Reading from the N-terminus, the 104-residue chain is Large ribosomal subunit protein uL24 (104 aa).

The protein belongs to the universal ribosomal protein uL24 family. As to quaternary structure, part of the 50S ribosomal subunit.

One of two assembly initiator proteins, it binds directly to the 5'-end of the 23S rRNA, where it nucleates assembly of the 50S subunit. Functionally, one of the proteins that surrounds the polypeptide exit tunnel on the outside of the subunit. This is Large ribosomal subunit protein uL24 from Corynebacterium aurimucosum (strain ATCC 700975 / DSM 44827 / CIP 107346 / CN-1) (Corynebacterium nigricans).